A 221-amino-acid chain; its full sequence is MSSFLEFAKPKMLDIKRKINFASGEKTDESVQPQQQTEQSSAQQTTPSAKAVSNPFITPLTESTPGMSESWVELAPSRTSLCSSVDINMVIIDEKDKDSRLSPVSIAQSPHVEFESLEQVKYKLVREMLPPGKNTDWIWDWSSRPENTPPKTVRMVQYGSNLTTPPNSPEPELYQYLPCESDSLFNVRVVFGFLVTNIFSFVVGAAVGFAVCRKLIKHHRQ.

The tract at residues 24–55 (GEKTDESVQPQQQTEQSSAQQTTPSAKAVSNP) is disordered. Residue Lys-26 forms a Glycyl lysine isopeptide (Lys-Gly) (interchain with G-Cter in ubiquitin) linkage. Residues 32 to 49 (QPQQQTEQSSAQQTTPSA) show a composition bias toward low complexity. The chain crosses the membrane as a helical span at residues 189-209 (VVFGFLVTNIFSFVVGAAVGF). Residues 189–209 (VVFGFLVTNIFSFVVGAAVGF) form a required for initiation of apoptosis region.

It belongs to the NIP3 family. Homodimer; via transmembrane domain. Interacts with ced-3 and ced-9. Post-translationally, ubiquitinated and degraded by the proteasome. Under oxidative stress conditions, ubiquitinated at Lys-26 in a pink-1 dependent manner. Colocalizes with pdr-1 and may be ubiquitinated by it. In terms of tissue distribution, expressed in all somatic tissues including neurons, pharynx, intestine, body wall muscles and vulva muscles.

It is found in the mitochondrion outer membrane. In terms of biological role, initiates apoptosis in a BH3-independent mechanism possibly by recruiting ced-3 to mitochondria and other cytoplasmic membranes. Has a role in lifespan and tumor growth. Required for the induction of mitophagy under stress conditions. The polypeptide is NIP3 homolog (Caenorhabditis elegans).